A 504-amino-acid chain; its full sequence is ATP synthase subunit alpha, chloroplastic (504 aa).

170–177 (GDRQTGKT) is an ATP binding site.

Belongs to the ATPase alpha/beta chains family. F-type ATPases have 2 components, CF(1) - the catalytic core - and CF(0) - the membrane proton channel. CF(1) has five subunits: alpha(3), beta(3), gamma(1), delta(1), epsilon(1). CF(0) has four main subunits: a, b, b' and c.

It is found in the plastid. It localises to the chloroplast thylakoid membrane. The enzyme catalyses ATP + H2O + 4 H(+)(in) = ADP + phosphate + 5 H(+)(out). Produces ATP from ADP in the presence of a proton gradient across the membrane. The alpha chain is a regulatory subunit. This is ATP synthase subunit alpha, chloroplastic from Pyropia yezoensis (Susabi-nori).